The following is a 193-amino-acid chain: Holliday junction branch migration complex subunit RuvA (193 aa).

The interval 1-64 (MIGRIAGILL…EDANLLYGFL (64 aa)) is domain I. A domain II region spans residues 65-139 (TPQERTTFRE…GKLGADLGEL (75 aa)). The flexible linker stretch occupies residues 139–143 (LAGAA). Residues 144–193 (SPSDHATDILNALLALGYSEKEGLAAIKNVPAGTGVSEGIKLALKALSKV) are domain III.

This sequence belongs to the RuvA family. Homotetramer. Forms an RuvA(8)-RuvB(12)-Holliday junction (HJ) complex. HJ DNA is sandwiched between 2 RuvA tetramers; dsDNA enters through RuvA and exits via RuvB. An RuvB hexamer assembles on each DNA strand where it exits the tetramer. Each RuvB hexamer is contacted by two RuvA subunits (via domain III) on 2 adjacent RuvB subunits; this complex drives branch migration. In the full resolvosome a probable DNA-RuvA(4)-RuvB(12)-RuvC(2) complex forms which resolves the HJ.

It localises to the cytoplasm. Functionally, the RuvA-RuvB-RuvC complex processes Holliday junction (HJ) DNA during genetic recombination and DNA repair, while the RuvA-RuvB complex plays an important role in the rescue of blocked DNA replication forks via replication fork reversal (RFR). RuvA specifically binds to HJ cruciform DNA, conferring on it an open structure. The RuvB hexamer acts as an ATP-dependent pump, pulling dsDNA into and through the RuvAB complex. HJ branch migration allows RuvC to scan DNA until it finds its consensus sequence, where it cleaves and resolves the cruciform DNA. This is Holliday junction branch migration complex subunit RuvA from Burkholderia lata (strain ATCC 17760 / DSM 23089 / LMG 22485 / NCIMB 9086 / R18194 / 383).